We begin with the raw amino-acid sequence, 680 residues long: Conserved oligomeric Golgi complex subunit 6 (680 aa).

Positions 479-517 (HKSKKSGQLPRRSRTSSDSSQLTSVDALLSSSPSPPQNN) are disordered.

It belongs to the COG6 family. Component of the conserved oligomeric Golgi complex which is composed of eight different subunits and is required for normal Golgi morphology and localization. Interacts with COG5, COG7 and COG8.

The protein localises to the golgi apparatus membrane. In terms of biological role, required for normal Golgi function. In Arabidopsis thaliana (Mouse-ear cress), this protein is Conserved oligomeric Golgi complex subunit 6.